Consider the following 124-residue polypeptide: Large ribosomal subunit protein bL19 (124 aa).

Belongs to the bacterial ribosomal protein bL19 family.

In terms of biological role, this protein is located at the 30S-50S ribosomal subunit interface and may play a role in the structure and function of the aminoacyl-tRNA binding site. This Dinoroseobacter shibae (strain DSM 16493 / NCIMB 14021 / DFL 12) protein is Large ribosomal subunit protein bL19.